The primary structure comprises 467 residues: Congo red hypersensitive protein 2 (467 aa).

The N-terminal stretch at 1–23 (MAIVNSWLICLVSIFSFVVRVEA) is a signal peptide. A glycan (N-linked (GlcNAc...) asparagine) is linked at asparagine 28. A disulfide bridge links cysteine 56 with cysteine 67. Residues 63–280 (SHDSCMPVPI…WSGGEINWDA (218 aa)) enclose the GH16 domain. Residue asparagine 96 is glycosylated (N-linked (GlcNAc...) asparagine). Glutamate 166 functions as the Nucleophile in the catalytic mechanism. The Proton donor role is filled by glutamate 170. A chitin-binding site is contributed by glutamate 170. Residues asparagine 190, asparagine 196, asparagine 233, and asparagine 237 are each glycosylated (N-linked (GlcNAc...) asparagine). Tryptophan 257 is a chitin binding site. N-linked (GlcNAc...) asparagine glycosylation is present at asparagine 261. Threonine 268 serves as a coordination point for chitin. Residues asparagine 297 and asparagine 310 are each glycosylated (N-linked (GlcNAc...) asparagine). A disordered region spans residues 337–444 (MDSDEGSGLD…SSSTSSMSGN (108 aa)). The span at 351 to 444 (ATTSSTQKSS…SSSTSSMSGN (94 aa)) shows a compositional bias: low complexity. A lipid anchor (GPI-anchor amidated asparagine) is attached at asparagine 445. Residues 446 to 467 (AGANVAANWRLTVLCVILGYVL) constitute a propeptide, removed in mature form.

This sequence belongs to the glycosyl hydrolase 16 family. CRH1 subfamily. The GPI-anchor is attached to the protein in the endoplasmic reticulum and serves to target the protein to the cell surface. There, the glucosamine-inositol phospholipid moiety is cleaved off and the GPI-modified mannoprotein is covalently attached via its lipidless GPI glycan remnant to the 1,6-beta-glucan of the outer cell wall layer.

The protein localises to the secreted. The protein resides in the cell wall. It is found in the membrane. It catalyses the reaction Random endo-hydrolysis of N-acetyl-beta-D-glucosaminide (1-&gt;4)-beta-linkages in chitin and chitodextrins.. Functionally, dual chitinase/transglycosylase that plays a role in cell wall architecture. Chitinase and transglycosylase activities are coupled. Required for the polysaccharide cross-linking at the septa and the cell wall. More specifically, transfers chitin to both beta(1-3)- and beta(1-6)glucan in the cell wall. The minimal number of intact hexopyranose units required in the molecule of the acceptor oligosaccharide is two and the effectivity of the acceptor increased with the increasing length of its oligosaccharide chain. In Saccharomyces cerevisiae (strain ATCC 204508 / S288c) (Baker's yeast), this protein is Congo red hypersensitive protein 2.